Reading from the N-terminus, the 130-residue chain is Fluoride-specific ion channel FluC (130 aa).

4 helical membrane-spanning segments follow: residues 3 to 23 (FIFL…YFVG), 39 to 59 (GTFS…HLAV), 67 to 87 (FGIF…SYGL), and 102 to 122 (VSYA…GWFL). 2 residues coordinate Na(+): glycine 77 and threonine 80.

It belongs to the fluoride channel Fluc/FEX (TC 1.A.43) family.

It is found in the cell inner membrane. It carries out the reaction fluoride(in) = fluoride(out). Its activity is regulated as follows. Na(+) is not transported, but it plays an essential structural role and its presence is essential for fluoride channel function. Its function is as follows. Fluoride-specific ion channel. Important for reducing fluoride concentration in the cell, thus reducing its toxicity. In Helicobacter pylori (strain Shi470), this protein is Fluoride-specific ion channel FluC.